The primary structure comprises 532 residues: Glucan synthesis regulatory protein (532 aa).

The disordered stretch occupies residues 374–532 (TANKRKSMAP…DAEDMKDIEI (159 aa)). The span at 381 to 393 (MAPSMASASGMRS) shows a compositional bias: low complexity. The segment covering 447 to 457 (PTTSLTASNAS) has biased composition (polar residues). A compositionally biased stretch (basic and acidic residues) spans 475–516 (SGEHSKEDIKVNEDSPAKERTSEDKEKKPETEANGKATESKG).

This sequence belongs to the KNR4/SMI1 family.

In terms of biological role, involved in the regulation of 1,3-beta-glucan synthase activity and cell-wall formation. The sequence is that of Glucan synthesis regulatory protein (cot-2) from Neurospora crassa (strain ATCC 24698 / 74-OR23-1A / CBS 708.71 / DSM 1257 / FGSC 987).